The sequence spans 487 residues: MASQNPNKKKVLFVTSEIADLVKTGGLGDVSAALPRAMAHLHDVRVLIPGYPQVMNSENPIHIIGELGGHAALPPCKIGRMDMPDGLVIYVLICPELYARDGGPYGANNGRDWPDNHIRFARLGLAAADIAANLAQIHWCPDLVHAHDWPAGLAPAYMHWRGQRTPTLFTIHNLAYQGVTSLGSCPELGIPAHALQQEGMEFYGKMSFLKAGMAYSSHITTVSATYAQEITTPDFGCGLDGFLAAKTQQGLLSGIPNGIDESWDAATDPHLFAPFAIGDWEGKAINAAHVRELFGLKDSEGPLFAVVSRLVYQKGLDLTEAVSEYIVQNGGQIAIIGRGEPEEEQAMRELALRFPGQIGVRIGFNETDARRMFAGSDFLLMPSRYEPCGLSQMYAQRFGSLPVARNTGGLADTIENGVTGFLFNESTADSYREALSRAFKVFAFPELLNAMRCRAMAAPFNWCKAVEPYAELYEKLVAKALGKTHHK.

ADP-alpha-D-glucose is bound at residue lysine 23.

The protein belongs to the glycosyltransferase 1 family. Bacterial/plant glycogen synthase subfamily.

It carries out the reaction [(1-&gt;4)-alpha-D-glucosyl](n) + ADP-alpha-D-glucose = [(1-&gt;4)-alpha-D-glucosyl](n+1) + ADP + H(+). It functions in the pathway glycan biosynthesis; glycogen biosynthesis. Synthesizes alpha-1,4-glucan chains using ADP-glucose. The protein is Glycogen synthase of Pseudomonas fluorescens (strain Pf0-1).